The chain runs to 143 residues: Large ribosomal subunit protein uL15 (143 aa).

The interval 1–56 (MELNSIKPAEGSKHAKRRVGRGIGSGLGKTAGRGHKGQKSRSGGYHKVGFEGGQMP) is disordered. Gly residues predominate over residues 21–31 (RGIGSGLGKTA).

This sequence belongs to the universal ribosomal protein uL15 family. In terms of assembly, part of the 50S ribosomal subunit.

Binds to the 23S rRNA. The polypeptide is Large ribosomal subunit protein uL15 (Delftia acidovorans (strain DSM 14801 / SPH-1)).